The sequence spans 175 residues: Transcriptional repressor NrdR (175 aa).

Residues 3 to 32 (CPYCSHPDSKVIDSRDVDDGVRRRRECVVC) fold into a zinc finger. Positions 47 to 137 (LFVVKKDQRR…VYREFTDITQ (91 aa)) constitute an ATP-cone domain.

This sequence belongs to the NrdR family. Zn(2+) is required as a cofactor.

Its function is as follows. Negatively regulates transcription of bacterial ribonucleotide reductase nrd genes and operons by binding to NrdR-boxes. The chain is Transcriptional repressor NrdR from Dehalococcoides mccartyi (strain CBDB1).